The following is a 171-amino-acid chain: Peptidyl-prolyl cis-trans isomerase slr1251 (171 aa).

One can recognise a PPIase cyclophilin-type domain in the interval 6 to 169; the sequence is FFDITIGSDT…QAIVISDCGE (164 aa).

Belongs to the cyclophilin-type PPIase family.

The catalysed reaction is [protein]-peptidylproline (omega=180) = [protein]-peptidylproline (omega=0). Functionally, PPIases accelerate the folding of proteins. It catalyzes the cis-trans isomerization of proline imidic peptide bonds in oligopeptides. This is Peptidyl-prolyl cis-trans isomerase slr1251 from Synechocystis sp. (strain ATCC 27184 / PCC 6803 / Kazusa).